Consider the following 363-residue polypeptide: Putative RAD2-like endonuclease 095R (363 aa).

This sequence belongs to the XPG/RAD2 endonuclease family. Mg(2+) serves as cofactor.

The protein localises to the host nucleus. Its function is as follows. Probable endonuclease. The sequence is that of Putative RAD2-like endonuclease 095R from Frog virus 3 (isolate Goorha) (FV-3).